The sequence spans 226 residues: Probable thiol methyltransferase 2 (226 aa).

S-adenosyl-L-methionine is bound by residues Trp-29, Trp-33, Trp-40, and Gly-67. Ser-79 bears the Phosphoserine mark. Residues Asp-88, 116–117 (DF), and Tyr-132 each bind S-adenosyl-L-methionine.

This sequence belongs to the class I-like SAM-binding methyltransferase superfamily. TPMT family.

It catalyses the reaction a thiol + S-adenosyl-L-methionine = a methyl thioether + S-adenosyl-L-homocysteine + H(+). Functionally, S-adenosyl-L-methionine-dependent methyltransferase. The sequence is that of Probable thiol methyltransferase 2 (HOL3) from Arabidopsis thaliana (Mouse-ear cress).